Here is a 60-residue protein sequence, read N- to C-terminus: Regulatory protein DegR (60 aa).

Stabilizes the phosphorylated form of DegU, leading to enhanced production of levansucrase, alkaline protease, and neutral protease. This chain is Regulatory protein DegR (degR), found in Bacillus subtilis subsp. natto.